The sequence spans 688 residues: Glycine--tRNA ligase beta subunit (688 aa).

This sequence belongs to the class-II aminoacyl-tRNA synthetase family. As to quaternary structure, tetramer of two alpha and two beta subunits.

It localises to the cytoplasm. The enzyme catalyses tRNA(Gly) + glycine + ATP = glycyl-tRNA(Gly) + AMP + diphosphate. The polypeptide is Glycine--tRNA ligase beta subunit (Clostridioides difficile (strain 630) (Peptoclostridium difficile)).